We begin with the raw amino-acid sequence, 268 residues long: Tryptophan synthase alpha chain (268 aa).

Residues Glu49 and Asp60 each act as proton acceptor in the active site.

The protein belongs to the TrpA family. Tetramer of two alpha and two beta chains.

The enzyme catalyses (1S,2R)-1-C-(indol-3-yl)glycerol 3-phosphate + L-serine = D-glyceraldehyde 3-phosphate + L-tryptophan + H2O. It functions in the pathway amino-acid biosynthesis; L-tryptophan biosynthesis; L-tryptophan from chorismate: step 5/5. Its function is as follows. The alpha subunit is responsible for the aldol cleavage of indoleglycerol phosphate to indole and glyceraldehyde 3-phosphate. This Escherichia coli O139:H28 (strain E24377A / ETEC) protein is Tryptophan synthase alpha chain.